The chain runs to 154 residues: Cyclin-dependent protein kinase inhibitor SMR11 (154 aa).

The interval 1-44 (MEQEEPCEAKETASSSIEPKTPNPNVPDSIPAIDSDSSLSEEEI) is disordered. Residues 27 to 38 (PDSIPAIDSDSS) show a composition bias toward low complexity.

In terms of assembly, interacts with CYCB2-4.

Its function is as follows. Probable cyclin-dependent protein kinase (CDK) inhibitor that functions as a repressor of mitosis in the endoreduplication cell cycle. The chain is Cyclin-dependent protein kinase inhibitor SMR11 from Arabidopsis thaliana (Mouse-ear cress).